A 287-amino-acid polypeptide reads, in one-letter code: 4-hydroxybenzoate octaprenyltransferase (287 aa).

7 consecutive transmembrane segments (helical) span residues 30-50, 92-112, 133-153, 158-178, 207-227, 232-252, and 266-286; these read ALWI…FALG, IAIA…LNGL, FFAI…PMAF, DTVP…SVAY, VLAI…LGAA, WPYW…YTLI, and HNNW…ALAV.

The protein belongs to the UbiA prenyltransferase family. Requires Mg(2+) as cofactor.

The protein localises to the cell inner membrane. The enzyme catalyses all-trans-octaprenyl diphosphate + 4-hydroxybenzoate = 4-hydroxy-3-(all-trans-octaprenyl)benzoate + diphosphate. Its pathway is cofactor biosynthesis; ubiquinone biosynthesis. Catalyzes the prenylation of para-hydroxybenzoate (PHB) with an all-trans polyprenyl group. Mediates the second step in the final reaction sequence of ubiquinone-8 (UQ-8) biosynthesis, which is the condensation of the polyisoprenoid side chain with PHB, generating the first membrane-bound Q intermediate 3-octaprenyl-4-hydroxybenzoate. The polypeptide is 4-hydroxybenzoate octaprenyltransferase (Burkholderia pseudomallei (strain 1106a)).